The primary structure comprises 504 residues: Maturase K (504 aa).

Belongs to the intron maturase 2 family. MatK subfamily.

It is found in the plastid. The protein localises to the chloroplast. In terms of biological role, usually encoded in the trnK tRNA gene intron. Probably assists in splicing its own and other chloroplast group II introns. This Quercus coccifera (Kermes oak) protein is Maturase K.